We begin with the raw amino-acid sequence, 123 residues long: Large ribosomal subunit protein eL8 (123 aa).

Belongs to the eukaryotic ribosomal protein eL8 family. Part of the 50S ribosomal subunit. Probably part of the RNase P complex.

It is found in the cytoplasm. Its function is as follows. Multifunctional RNA-binding protein that recognizes the K-turn motif in ribosomal RNA, the RNA component of RNase P, box H/ACA, box C/D and box C'/D' sRNAs. In Methanopyrus kandleri (strain AV19 / DSM 6324 / JCM 9639 / NBRC 100938), this protein is Large ribosomal subunit protein eL8.